Here is a 513-residue protein sequence, read N- to C-terminus: Tryptophan--tRNA ligase 1 (513 aa).

The short motif at proline 86 to histidine 94 is the 'HIGH' region element. Positions lysine 393–serine 397 match the 'KMSKS' region motif.

Belongs to the class-I aminoacyl-tRNA synthetase family.

The protein localises to the cytoplasm. It catalyses the reaction tRNA(Trp) + L-tryptophan + ATP = L-tryptophyl-tRNA(Trp) + AMP + diphosphate + H(+). The polypeptide is Tryptophan--tRNA ligase 1 (Halobacterium salinarum (strain ATCC 700922 / JCM 11081 / NRC-1) (Halobacterium halobium)).